The primary structure comprises 1010 residues: Lysosomal alpha-mannosidase (1010 aa).

Positions 1–22 are cleaved as a signal peptide; that stretch reads MVIKKLFILIFCLFLIINEING. Residues 23-40 constitute a propeptide, pro I; sequence KKTKINDIKKSKPKLSST. Residues histidine 51 and aspartate 53 each coordinate Zn(2+). Asparagine 68 carries N-linked (GlcNAc...) asparagine glycosylation. Zn(2+)-binding residues include aspartate 173 and histidine 420. Catalysis depends on aspartate 173, which acts as the Nucleophile. Asparagine 480, asparagine 520, asparagine 528, asparagine 539, asparagine 623, asparagine 760, asparagine 784, asparagine 828, asparagine 954, and asparagine 963 each carry an N-linked (GlcNAc...) asparagine glycan. Residues 508–595 constitute a propeptide, pro II; that stretch reads RNEPVRIPIP…GGGKINEKVS (88 aa).

Belongs to the glycosyl hydrolase 38 family. In terms of assembly, tetramer of equimolar amounts of 60 and 58 kDa subunits. Requires Zn(2+) as cofactor. In terms of processing, first cleaved into the mature 58 kDa subunit and an intermediate 82 kDa subunit. The latter is then cleaved to its mature 60 kDa subunit form. These events occur in multiple intracellular compartments. The 60 kDa subunit may form one or more intramolecular disulfide bonds.

Its subcellular location is the lysosome. The catalysed reaction is Hydrolysis of terminal, non-reducing alpha-D-mannose residues in alpha-D-mannosides.. The sequence is that of Lysosomal alpha-mannosidase (manA) from Dictyostelium discoideum (Social amoeba).